The following is an 88-amino-acid chain: Phosphocarrier protein HPr (88 aa).

In terms of domain architecture, HPr spans 1 to 88; the sequence is MEQNSYVIID…DVLSKEGLTK (88 aa). The active-site Pros-phosphohistidine intermediate is His15. Ser46 bears the Phosphoserine; by HPrK/P mark.

The protein resides in the cytoplasm. With respect to regulation, phosphorylation on Ser-46 inhibits the phosphoryl transfer from enzyme I to HPr. In terms of biological role, general (non sugar-specific) component of the phosphoenolpyruvate-dependent sugar phosphotransferase system (sugar PTS). This major carbohydrate active-transport system catalyzes the phosphorylation of incoming sugar substrates concomitantly with their translocation across the cell membrane. The phosphoryl group from phosphoenolpyruvate (PEP) is transferred to the phosphoryl carrier protein HPr by enzyme I. Phospho-HPr then transfers it to the PTS EIIA domain. P-Ser-HPr interacts with the catabolite control protein A (CcpA), forming a complex that binds to DNA at the catabolite response elements cre, operator sites preceding a large number of catabolite-regulated genes. Thus, P-Ser-HPr is a corepressor in carbon catabolite repression (CCR), a mechanism that allows bacteria to coordinate and optimize the utilization of available carbon sources. P-Ser-HPr also plays a role in inducer exclusion, in which it probably interacts with several non-PTS permeases and inhibits their transport activity. The sequence is that of Phosphocarrier protein HPr (ptsH) from Staphylococcus aureus (strain MSSA476).